The chain runs to 274 residues: MPIVKAKPTSAGRRFVVQVTSLELYKGRPHPALTKKLSKSGGRNNQGRITVRHCGGGHKRLYRIIDFRRDKIDVLGRVKRIEYDPNRSAHIALINYSDGEKRYIIAPKAVKVGDIITSGREAPIRDGNCLPLRNIPVGTLVHCIELKPGKGAQIARSAGSSCQLVAREGDHAMLRLRSGEIRKVPLECRATIGEVGNDGHGLRSLGKAGAMRWRGKRPTVRGVAMNPVDHPHGGGEGRTSGGRHPVSPWGVPTKGYKTRRNKRTGKFIVRRRKK.

Residues 222–257 are disordered; it reads GVAMNPVDHPHGGGEGRTSGGRHPVSPWGVPTKGYK.

It belongs to the universal ribosomal protein uL2 family. As to quaternary structure, part of the 50S ribosomal subunit. Forms a bridge to the 30S subunit in the 70S ribosome.

Functionally, one of the primary rRNA binding proteins. Required for association of the 30S and 50S subunits to form the 70S ribosome, for tRNA binding and peptide bond formation. It has been suggested to have peptidyltransferase activity; this is somewhat controversial. Makes several contacts with the 16S rRNA in the 70S ribosome. The protein is Large ribosomal subunit protein uL2 of Nitrosococcus oceani (strain ATCC 19707 / BCRC 17464 / JCM 30415 / NCIMB 11848 / C-107).